Consider the following 86-residue polypeptide: Small ribosomal subunit protein bS20 (86 aa).

Belongs to the bacterial ribosomal protein bS20 family.

Binds directly to 16S ribosomal RNA. The chain is Small ribosomal subunit protein bS20 from Bifidobacterium longum (strain DJO10A).